Reading from the N-terminus, the 449-residue chain is Nucleoprotein (449 aa).

A disordered region spans residues 1–55; that stretch reads MSFTPGKQSSSRASSGNRSGNGILKWADQSDQSRNVQTRGRRVQSKQTATSQQPS. The span at 9–22 shows a compositional bias: low complexity; that stretch reads SSSRASSGNRSGNG. 2 stretches are compositionally biased toward polar residues: residues 29–38 and 45–55; these read QSDQSRNVQT and SKQTATSQQPS. Residues 52–194 are RNA-binding; it reads QQPSGGTVVP…GYYIEGSGRS (143 aa). Residues 61 to 190 form the CoV N NTD domain; sequence PYYSWFSGIT…VLPQGYYIEG (130 aa). RNA is bound by residues arginine 106, arginine 122, and arginine 164. 3 disordered regions span residues 158–231, 266–297, and 387–449; these read PADI…VTPD, ILNK…NFGG, and MMNI…TSEI. The residue at position 167 (serine 167) is a Phosphoserine; by host. Position 174 is a phosphothreonine; by host (threonine 174). Serine 191 is subject to Phosphoserine; by host. 2 stretches are compositionally biased toward polar residues: residues 194–204 and 212–227; these read SAPNSRSTSRA and GSRS…STPG. The region spanning 259–384 is the CoV N CTD domain; it reads AKEVRQKILN…QNLNAYQHQE (126 aa). A compositionally biased stretch (basic residues) spans 266-276; sequence ILNKPRQKRSP. A dimerization region spans residues 266-385; sequence ILNKPRQKRS…NLNAYQHQED (120 aa). A Phosphoserine; by host modification is found at serine 391. A compositionally biased stretch (polar residues) spans 400 to 410; that stretch reads QKNGQVENDNI. Positions 423–440 are enriched in basic and acidic residues; that stretch reads KSRELTAEDISLLKKMDE. Position 424 is a phosphoserine; by host (serine 424). Phosphothreonine; by host is present on threonine 428.

It belongs to the betacoronavirus nucleocapsid protein family. As to quaternary structure, homooligomer. Both monomeric and oligomeric forms interact with RNA. Interacts with protein M. Interacts with NSP3; this interaction serves to tether the genome to the newly translated replicase-transcriptase complex at a very early stage of infection. In terms of processing, ADP-ribosylated. The ADP-ribosylation is retained in the virion during infection. Post-translationally, phosphorylated on serine and threonine residues.

The protein resides in the virion. The protein localises to the host endoplasmic reticulum-Golgi intermediate compartment. It localises to the host Golgi apparatus. Functionally, packages the positive strand viral genome RNA into a helical ribonucleocapsid (RNP) and plays a fundamental role during virion assembly through its interactions with the viral genome and membrane protein M. Plays an important role in enhancing the efficiency of subgenomic viral RNA transcription as well as viral replication. This Sus scrofa (Pig) protein is Nucleoprotein.